The chain runs to 166 residues: Urease accessory protein UreE (166 aa).

A disordered region spans residues 133 to 154 (QPEHGAYGGGHHHSRHGDEDFN).

This sequence belongs to the UreE family.

It localises to the cytoplasm. Involved in urease metallocenter assembly. Binds nickel. Probably functions as a nickel donor during metallocenter assembly. The polypeptide is Urease accessory protein UreE (Pseudomonas fluorescens (strain SBW25)).